The chain runs to 473 residues: Ribonuclease Y (473 aa).

The helical transmembrane segment at 4–24 threads the bilayer; it reads LIAFIILLILFVLLITIVPVV. Positions 158-218 constitute a KH domain; it reads SLFNIDIIDE…IRREIARIVM (61 aa). Residues 285 to 378 form the HD domain; that stretch reads ILSHSLEVAE…VKIVDTLSAA (94 aa).

It belongs to the RNase Y family.

It is found in the cell membrane. Its function is as follows. Endoribonuclease that initiates mRNA decay. The polypeptide is Ribonuclease Y (Ureaplasma parvum serovar 3 (strain ATCC 27815 / 27 / NCTC 11736)).